Reading from the N-terminus, the 621-residue chain is tRNA uridine 5-carboxymethylaminomethyl modification enzyme MnmG (621 aa).

FAD is bound at residue 9–14 (GGGHAG). An NAD(+)-binding site is contributed by 268–282 (GPRYCPSIEDKINRF).

The protein belongs to the MnmG family. As to quaternary structure, homodimer. Heterotetramer of two MnmE and two MnmG subunits. It depends on FAD as a cofactor.

It is found in the cytoplasm. In terms of biological role, NAD-binding protein involved in the addition of a carboxymethylaminomethyl (cmnm) group at the wobble position (U34) of certain tRNAs, forming tRNA-cmnm(5)s(2)U34. This is tRNA uridine 5-carboxymethylaminomethyl modification enzyme MnmG from Campylobacter fetus subsp. fetus (strain 82-40).